Here is a 331-residue protein sequence, read N- to C-terminus: ATP-dependent 6-phosphofructokinase (331 aa).

Gly-12 is an ATP binding site. ADP contacts are provided by residues 22 to 26 (RGVVR) and 55 to 60 (RYSVSD). ATP contacts are provided by residues 73-74 (RF) and 103-106 (GDGS). Asp-104 provides a ligand contact to Mg(2+). 127 to 129 (TID) contributes to the substrate binding site. The active-site Proton acceptor is Asp-129. Arg-156 contributes to the ADP binding site. Residues Arg-164 and 171 to 173 (MGR) contribute to the substrate site. Residues 187 to 189 (GCE), Lys-213, and 215 to 217 (KKH) contribute to the ADP site. Substrate contacts are provided by residues Glu-224, Arg-245, and 251-254 (HIQR).

It belongs to the phosphofructokinase type A (PFKA) family. ATP-dependent PFK group I subfamily. Prokaryotic clade 'B1' sub-subfamily. In terms of assembly, homotetramer. Mg(2+) is required as a cofactor.

The protein localises to the cytoplasm. It catalyses the reaction beta-D-fructose 6-phosphate + ATP = beta-D-fructose 1,6-bisphosphate + ADP + H(+). The protein operates within carbohydrate degradation; glycolysis; D-glyceraldehyde 3-phosphate and glycerone phosphate from D-glucose: step 3/4. Allosterically activated by ADP and other diphosphonucleosides, and allosterically inhibited by phosphoenolpyruvate. In terms of biological role, catalyzes the phosphorylation of D-fructose 6-phosphate to fructose 1,6-bisphosphate by ATP, the first committing step of glycolysis. The polypeptide is ATP-dependent 6-phosphofructokinase (Yersinia enterocolitica serotype O:8 / biotype 1B (strain NCTC 13174 / 8081)).